The following is a 272-amino-acid chain: Alcohol dehydrogenase-related 31 kDa protein (272 aa).

Residue 11-34 (YVADCGGIALETSKVLMTKNIAKL) coordinates NAD(+). Ser-139 provides a ligand contact to substrate. The Proton acceptor role is filled by Tyr-152.

The protein belongs to the short-chain dehydrogenases/reductases (SDR) family.

This Drosophila mauritiana (Fruit fly) protein is Alcohol dehydrogenase-related 31 kDa protein (Adhr).